The primary structure comprises 813 residues: Putative ATPase, plasma membrane-like (813 aa).

At 1–66 the chain is on the cytoplasmic side; the sequence is MATGDSLEDI…KKKEHITLRF (66 aa). A helical membrane pass occupies residues 67–86; sequence FALMFKPLSWVIQAAAIMAM. The Extracellular segment spans residues 87–94; it reads LFANGDGR. A helical transmembrane segment spans residues 95–115; the sequence is QLFLGIVCLLIVNTIICYLKE. At 116–245 the chain is on the cytoplasmic side; that stretch reads DDAANVVAMA…GHFRKVVTEI (130 aa). Residues 246-266 traverse the membrane as a helical segment; it reads ENLCVISIAIGISIEVIVMYW. The Extracellular segment spans residues 267 to 275; it reads IQRRNFSDV. A helical membrane pass occupies residues 276-293; sequence INNLLVLVIGGIPLAMPT. The Cytoplasmic segment spans residues 294 to 555; sequence VLYVIMVTGS…ASRAILQQMK (262 aa). Asp331 functions as the 4-aspartylphosphate intermediate in the catalytic mechanism. Mg(2+) contacts are provided by Asp500 and Asp504. Residues 556 to 577 form a helical membrane-spanning segment; that stretch reads HYTIYAVSITIRVVFGFMFIAL. Topologically, residues 578–582 are extracellular; the sequence is IWKFD. A helical transmembrane segment spans residues 583-605; the sequence is FSPFMVLAIALLNEETTKAITMD. Residues 606–622 lie on the Cytoplasmic side of the membrane; that stretch reads NVTNPSPTPDSLKLKEI. Residues 623–643 traverse the membrane as a helical segment; sequence FATGVVYGSYMALITVVFFWA. Residues 644–664 are Extracellular-facing; it reads AYRTDIFPRTFHVRDLRGNEA. A helical transmembrane segment spans residues 665-685; it reads EMMCALYLQVSIMSQALFFVI. Residues 686–697 are Cytoplasmic-facing; it reads QSRSWFFVERPG. The chain crosses the membrane as a helical span at residues 698–718; that stretch reads ELLFLSFVTVQTIATTLAVYA. The Extracellular portion of the chain corresponds to 719–726; that stretch reads SWETARIE. Residues 727–747 form a helical membrane-spanning segment; sequence GIGWSWAGVIWLYNIIFFFPL. Topologically, residues 748–813 are cytoplasmic; that stretch reads DIMKFGIRYI…SQDLRGVGWV (66 aa). Position 776 is a phosphoserine (Ser776).

The protein belongs to the cation transport ATPase (P-type) (TC 3.A.3) family. Type IIIA subfamily.

It localises to the membrane. This Arabidopsis thaliana (Mouse-ear cress) protein is Putative ATPase, plasma membrane-like.